Reading from the N-terminus, the 301-residue chain is Protein RESTRICTED TEV MOVEMENT 3 (301 aa).

One can recognise an MATH domain in the interval 6 to 134 (DKKITWTIKN…NGELKIVVEI (129 aa)). Residues 235–289 (KLDWLEKKLYEVSEKKENEEASETGLQEMEEELKDMKQKCLEMEALVEKEKAKVS) are a coiled coil.

In terms of assembly, self-interacts. Interacts with RTM1.

In terms of biological role, required for the restriction of long-distance movement of the pathogenic tobacco etch virus (TEV) without causing a hypersensitive response or inducing systemic acquired resistance. This Arabidopsis thaliana (Mouse-ear cress) protein is Protein RESTRICTED TEV MOVEMENT 3 (RTM3).